Reading from the N-terminus, the 539-residue chain is Monocarboxylate transporter 8 (539 aa).

Residues 1–92 (MALQSQASEE…VETRGTARGF (92 aa)) are disordered. N-acetylalanine is present on alanine 2. At 2–96 (ALQSQASEEA…GTARGFQPPE (95 aa)) the chain is on the cytoplasmic side. Positions 31–41 (PESEPEPEPEP) are enriched in acidic residues. Residues 42–64 (EPVPVPPPEPQPEPQPLPDPAPL) show a composition bias toward pro residues. Residues 97–117 (GGFGWVVVFAATWCNGSIFGI) form a helical membrane-spanning segment. The Extracellular segment spans residues 118-143 (HNSVGILYSMLLEEEKEKNRQVEFQA). The chain crosses the membrane as a helical span at residues 144–164 (AWVGALAMGMIFFCSPIVSIF). Over 165-171 (TDRLGCR) the chain is Cytoplasmic. Residues 172–192 (ITATAGAAVAFIGLHTSSFTS) traverse the membrane as a helical segment. Residues 193 to 200 (SLSLRYFT) lie on the Extracellular side of the membrane. A helical transmembrane segment spans residues 201–221 (YGILFGCGCSFAFQPSLVILG). Topologically, residues 222-229 (HYFQRRLG) are cytoplasmic. The chain crosses the membrane as a helical span at residues 230–250 (LANGVVSAGSSIFSMSFPFLI). Over 251–258 (RMLGDKIK) the chain is Extracellular. A helical membrane pass occupies residues 259-279 (LAQTFQVLSTFMFVLMLLSLT). Over 280–322 (YRPLLPSSQDTPSKRGVRTLHQRFLAQLRKYFNMRVFRQRTYR) the chain is Cytoplasmic. The chain crosses the membrane as a helical span at residues 323 to 343 (IWAFGIAAAALGYFVPYVHLM). Residues 344–356 (KYVEEEFSEIKET) are Extracellular-facing. The chain crosses the membrane as a helical span at residues 357-377 (WVLLVCIGATSGLGRLVSGHI). Residues 378–386 (SDSIPGLKK) are Cytoplasmic-facing. A helical transmembrane segment spans residues 387–407 (IYLQVLSFLLLGLMSMMIPLC). Over 408–409 (RD) the chain is Extracellular. Residues 410–430 (FGGLIVVCLFLGLCDGFFITI) traverse the membrane as a helical segment. Residues 431-447 (MAPIAFELVGPMQASQA) are Cytoplasmic-facing. The helical transmembrane segment at 448-468 (IGYLLGMMALPMIAGPPIAGL) threads the bilayer. At 469 to 477 (LRNCFGDYH) the chain is on the extracellular side. A helical membrane pass occupies residues 478-498 (VAFYFAGVPPIIGAVILFFVP). Over 499 to 539 (LMHQRMFKKEQRDSSKDKMLAPDPDPNGELLPGSPNPEEPI) the chain is Cytoplasmic. Residues 508–518 (EQRDSSKDKML) show a composition bias toward basic and acidic residues. The tract at residues 508–539 (EQRDSSKDKMLAPDPDPNGELLPGSPNPEEPI) is disordered.

Belongs to the major facilitator superfamily. Monocarboxylate porter (TC 2.A.1.13) family. In terms of assembly, monomer. Homodimer. Homooligomer. Highly expressed in liver and heart. In adult brain tissue expression is largely confined to endothelial cells of the blood-brain barrier (at protein level).

Its subcellular location is the cell membrane. It is found in the apical cell membrane. It carries out the reaction 3,3',5-triiodo-L-thyronine(out) = 3,3',5-triiodo-L-thyronine(in). It catalyses the reaction L-thyroxine(out) = L-thyroxine(in). The enzyme catalyses 3,3',5'-triiodo-L-thyronine(out) = 3,3',5'-triiodo-L-thyronine(in). The catalysed reaction is 3,3'-diiodo-L-thyronine(out) = 3,3'-diiodo-L-thyronine(in). Specific thyroid hormone transmembrane transporter, that mediates both uptake and efflux of thyroid hormones across the cell membrane independently of pH or a Na(+) gradient. Major substrates are the iodothyronines T3 and T4 and to a lesser extent rT3 and 3,3-diiodothyronine (3,3'-T2). Acts as an important mediator of thyroid hormone transport, especially T3, through the blood-brain barrier. The sequence is that of Monocarboxylate transporter 8 (SLC16A2) from Homo sapiens (Human).